We begin with the raw amino-acid sequence, 228 residues long: Probable calcium-binding protein CML48 (228 aa).

2 EF-hand domains span residues 52 to 87 (ETHPEIVRSFESADRNRSGFLEESELRQALSLSGYD) and 121 to 156 (NCLAQWRAIFNRYDRDRSGKMNSTQLRDAFYNLGCV). Positions 65, 67, 69, and 76 each coordinate Ca(2+).

In terms of biological role, potential calcium sensor. The sequence is that of Probable calcium-binding protein CML48 (CML48) from Arabidopsis thaliana (Mouse-ear cress).